The primary structure comprises 459 residues: Ribulose bisphosphate carboxylase (459 aa).

Residue N111 participates in substrate binding. The active-site Proton acceptor is the K166. Residue K168 participates in substrate binding. Residues K191, D193, and E194 each contribute to the Mg(2+) site. At K191 the chain carries N6-carboxylysine. Residue H287 is the Proton acceptor of the active site. 3 residues coordinate substrate: R288, H321, and S368.

It belongs to the RuBisCO large chain family. Type II subfamily. Homodimer. It depends on Mg(2+) as a cofactor.

It catalyses the reaction 2 (2R)-3-phosphoglycerate + 2 H(+) = D-ribulose 1,5-bisphosphate + CO2 + H2O. The enzyme catalyses D-ribulose 1,5-bisphosphate + O2 = 2-phosphoglycolate + (2R)-3-phosphoglycerate + 2 H(+). RuBisCO catalyzes two reactions: the carboxylation of D-ribulose 1,5-bisphosphate, the primary event in carbon dioxide fixation, as well as the oxidative fragmentation of the pentose substrate. Both reactions occur simultaneously and in competition at the same active site. The protein is Ribulose bisphosphate carboxylase of Albidiferax ferrireducens (strain ATCC BAA-621 / DSM 15236 / T118) (Rhodoferax ferrireducens).